Consider the following 53-residue polypeptide: UPF0391 membrane protein PA5482 (53 aa).

2 helical membrane-spanning segments follow: residues 4–24 and 29–49; these read WAIT…GGIA and GIAK…FFFG.

This sequence belongs to the UPF0391 family.

It localises to the cell membrane. The protein is UPF0391 membrane protein PA5482 of Pseudomonas aeruginosa (strain ATCC 15692 / DSM 22644 / CIP 104116 / JCM 14847 / LMG 12228 / 1C / PRS 101 / PAO1).